The primary structure comprises 324 residues: Putative exosome complex exonuclease RRP42 (324 aa).

The protein belongs to the RNase PH family. In terms of assembly, component of the RNA exosome complex.

It localises to the nucleus. It is found in the nucleolus. Its subcellular location is the cytoplasm. In terms of biological role, non-catalytic component of the RNA exosome complex which has 3'-&gt;5' exoribonuclease activity and participates in a multitude of cellular RNA processing and degradation events. This Dictyostelium discoideum (Social amoeba) protein is Putative exosome complex exonuclease RRP42 (exosc7).